The following is a 155-amino-acid chain: D-aminoacyl-tRNA deacylase (155 aa).

A Gly-cisPro motif, important for rejection of L-amino acids motif is present at residues 137 to 138; the sequence is GP.

It belongs to the DTD family. In terms of assembly, homodimer.

The protein localises to the cytoplasm. It carries out the reaction glycyl-tRNA(Ala) + H2O = tRNA(Ala) + glycine + H(+). The catalysed reaction is a D-aminoacyl-tRNA + H2O = a tRNA + a D-alpha-amino acid + H(+). An aminoacyl-tRNA editing enzyme that deacylates mischarged D-aminoacyl-tRNAs. Also deacylates mischarged glycyl-tRNA(Ala), protecting cells against glycine mischarging by AlaRS. Acts via tRNA-based rather than protein-based catalysis; rejects L-amino acids rather than detecting D-amino acids in the active site. By recycling D-aminoacyl-tRNA to D-amino acids and free tRNA molecules, this enzyme counteracts the toxicity associated with the formation of D-aminoacyl-tRNA entities in vivo and helps enforce protein L-homochirality. The polypeptide is D-aminoacyl-tRNA deacylase (Nitrosococcus oceani (strain ATCC 19707 / BCRC 17464 / JCM 30415 / NCIMB 11848 / C-107)).